The following is a 159-amino-acid chain: Large ribosomal subunit protein uL22 (159 aa).

The interval 129–159 (VEGQQKAKMARQKAVTSVVKAPSKTQGGVQK) is disordered.

This sequence belongs to the universal ribosomal protein uL22 family. In terms of assembly, part of the 50S ribosomal subunit.

This protein binds specifically to 23S rRNA; its binding is stimulated by other ribosomal proteins, e.g. L4, L17, and L20. It is important during the early stages of 50S assembly. It makes multiple contacts with different domains of the 23S rRNA in the assembled 50S subunit and ribosome. Functionally, the globular domain of the protein is located near the polypeptide exit tunnel on the outside of the subunit, while an extended beta-hairpin is found that lines the wall of the exit tunnel in the center of the 70S ribosome. This is Large ribosomal subunit protein uL22 (rplV) from Mycoplasma pneumoniae (strain ATCC 29342 / M129 / Subtype 1) (Mycoplasmoides pneumoniae).